Reading from the N-terminus, the 419-residue chain is Multifunctional CCA protein (419 aa).

2 residues coordinate ATP: glycine 8 and arginine 11. 2 residues coordinate CTP: glycine 8 and arginine 11. Positions 21 and 23 each coordinate Mg(2+). Positions 91, 141, and 144 each coordinate ATP. CTP is bound by residues arginine 91, arginine 141, and arginine 144. The 102-residue stretch at 230–331 (TGVHVMMVLD…VRLLERCDAL (102 aa)) folds into the HD domain.

It belongs to the tRNA nucleotidyltransferase/poly(A) polymerase family. Bacterial CCA-adding enzyme type 1 subfamily. As to quaternary structure, monomer. Can also form homodimers and oligomers. Mg(2+) serves as cofactor. Ni(2+) is required as a cofactor.

The catalysed reaction is a tRNA precursor + 2 CTP + ATP = a tRNA with a 3' CCA end + 3 diphosphate. It catalyses the reaction a tRNA with a 3' CCA end + 2 CTP + ATP = a tRNA with a 3' CCACCA end + 3 diphosphate. Functionally, catalyzes the addition and repair of the essential 3'-terminal CCA sequence in tRNAs without using a nucleic acid template. Adds these three nucleotides in the order of C, C, and A to the tRNA nucleotide-73, using CTP and ATP as substrates and producing inorganic pyrophosphate. tRNA 3'-terminal CCA addition is required both for tRNA processing and repair. Also involved in tRNA surveillance by mediating tandem CCA addition to generate a CCACCA at the 3' terminus of unstable tRNAs. While stable tRNAs receive only 3'-terminal CCA, unstable tRNAs are marked with CCACCA and rapidly degraded. The polypeptide is Multifunctional CCA protein (Paracidovorax citrulli (strain AAC00-1) (Acidovorax citrulli)).